A 237-amino-acid chain; its full sequence is MLTTWLTEAKKIVIFTGAGMSTESGVPDFRSSRGLWQGKNPEALASVDAMDHNREAFIDFYRMRIEGLQGVRPHKGYDVLAAWEKELPITSIITQNTDGLHEQAGSEVVLPLHGSIQRLYCVACGQRYDVARYITNEPYCSCGGFIRPAVVLFGEMLNTDTLALAERHTKEADLFLVLGSSLVVSPANLFPKIAKECGAKLVIVNHDETPLDPLADLVIQDQSIGTFLEETNRALQA.

The Deacetylase sirtuin-type domain maps to 1 to 237; that stretch reads MLTTWLTEAK…LEETNRALQA (237 aa). Positions 18, 22, 29, 30, 95, 98, and 113 each coordinate NAD(+). Phe29 is a nicotinamide binding site. Asp98 serves as a coordination point for nicotinamide. The active-site Proton acceptor is the His113. Zn(2+) contacts are provided by Cys121, Cys124, Cys140, and Cys142. NAD(+)-binding residues include Ser180, Ser181, Asn205, and Ile224.

The protein belongs to the sirtuin family. Class U subfamily. Zn(2+) serves as cofactor.

The protein resides in the cytoplasm. It carries out the reaction N(6)-acetyl-L-lysyl-[protein] + NAD(+) + H2O = 2''-O-acetyl-ADP-D-ribose + nicotinamide + L-lysyl-[protein]. Its function is as follows. NAD-dependent protein deacetylase which modulates the activities of several enzymes which are inactive in their acetylated form. In Halalkalibacterium halodurans (strain ATCC BAA-125 / DSM 18197 / FERM 7344 / JCM 9153 / C-125) (Bacillus halodurans), this protein is NAD-dependent protein deacetylase.